We begin with the raw amino-acid sequence, 465 residues long: GTPase Der (465 aa).

2 consecutive EngA-type G domains span residues 3–166 and 184–358; these read FLVA…LNEY and IHFS…ACAN. GTP is bound by residues 9–16, 56–60, 118–121, 190–197, 237–241, and 302–305; these read GRANVGKS, DTGGI, NKVD, GRPNVGKS, DTAGV, and NKWD. The region spanning 359-443 is the KH-like domain; sequence KKITTADATR…PIVFEFKQSE (85 aa). Residues 446–465 are disordered; sequence FADRKNKRSKDEGSKSKKVK.

This sequence belongs to the TRAFAC class TrmE-Era-EngA-EngB-Septin-like GTPase superfamily. EngA (Der) GTPase family. Associates with the 50S ribosomal subunit.

Its function is as follows. GTPase that plays an essential role in the late steps of ribosome biogenesis. This Francisella tularensis subsp. holarctica (strain FTNF002-00 / FTA) protein is GTPase Der.